The chain runs to 1104 residues: Reverse gyrase (1104 aa).

An RG N-terminal-type zinc finger spans residues 1–39 (MAVNSKYHHSCINCGGLNTDERNERGLPCEVCLPEDSPS). Zn(2+) contacts are provided by Cys11, Cys14, Cys29, and Cys32. Residues Phe75, Asp78, Gln83, Gly103, Gly105, Lys106, Thr107, and Thr108 each contribute to the ADP site. Residues Gln83 and 100–107 (APTGVGKT) each bind ATP. The Helicase ATP-binding domain maps to 87–242 (AKRIVQGKSF…FSTIKQGKIY (156 aa)). A DEAD box motif is present at residues 203 to 206 (DDVD). An insert region region spans residues 223 to 250 (GIPEEIIRKAFSTIKQGKIYERPKNLKP). Residues 300–522 (KLVELLEIFR…EAEANWKELV (223 aa)) form the Helicase C-terminal domain. The segment at 390 to 460 (RFSLELDKAP…KDEDLELIIP (71 aa)) is latch region. Residues 538–1104 (DTSRSLLIIV…EEIKSLMEEG (567 aa)) are topoisomerase I. Residues 542–699 (SLLIIVESPT…SLRRIEMHEI (158 aa)) enclose the Toprim domain. Glu548 lines the Mg(2+) pocket. The RG C-terminal-type zinc-finger motif lies at 618 to 645 (LKRCRDCGYQFTEDRDECPVCSSKNIDD). Residues Cys621, Cys624, Cys635, and Cys638 each coordinate Zn(2+). Asp668 is a Mg(2+) binding site. Residues 715-1101 (DFNLVKAQIV…LLYEEIKSLM (387 aa)) form the Topo IA-type catalytic domain. Tyr851 (O-(5'-phospho-DNA)-tyrosine intermediate) is an active-site residue.

The protein in the N-terminal section; belongs to the DEAD box helicase family. DDVD subfamily. This sequence in the C-terminal section; belongs to the type IA topoisomerase family. In terms of assembly, monomer. Zn(2+) serves as cofactor. Requires Mg(2+) as cofactor.

It localises to the cytoplasm. The enzyme catalyses ATP + H2O = ADP + phosphate + H(+). In terms of biological role, modifies the topological state of DNA by introducing positive supercoils in an ATP-dependent process. Increases the linking number in steps of +1. Probably recognizes regions with a low GC content which melt and form a ssDNA bubble, allowing the enzyme to bind and cleave the DNA prior to strand passage; the bubble is probably cleaved by 2 reverse gyrase molecules, one on each strand. Positively supercoils DNA with all NTPS, although it strongly prefers ATP. In the presence of non-hydrolyzable ATP analogs it partially relaxes negative supercoils. Has an intrinsic ATPase activity that is stimulated by DNA; ssDNA is most effective. Binds to single-stranded DNA, transiently cleaves and then rejoins the ends, introducing a positive supercoil in the process. The scissile phosphodiester is attacked by the catalytic tyrosine of the enzyme, resulting in the formation of a DNA-(5'-phosphotyrosyl)-enzyme intermediate. The helicase-like domain is a nucleotide-dependent switch that alternates between a physically closed ATP-bound state with a slight preference for dsDNA, and an open ADP-bound state with a high preference for ssDNA. Whole enzyme has a very poor (k-unwind=0.001 sec(-1)) non-processive helicase activity in the 3'-5' direction that works on short substrates, while the isolated helicase domain has a slightly better helicase activity that works in both directions. Probably involved in rewinding DNA strands in regions of the chromosome that have opened up to allow replication, transcription, DNA repair and/or for DNA protection. The chain is Reverse gyrase from Thermotoga maritima (strain ATCC 43589 / DSM 3109 / JCM 10099 / NBRC 100826 / MSB8).